A 274-amino-acid chain; its full sequence is uncharacterized protein (274 aa).

The signal sequence occupies residues M1–A30.

The protein to M.tuberculosis Rv1405c.

This is an uncharacterized protein from Mycobacterium tuberculosis (strain CDC 1551 / Oshkosh).